Consider the following 415-residue polypeptide: Beta-1,4-glucuronyltransferase 1 (415 aa).

Over 1–8 (MQMSYAIR) the chain is Cytoplasmic. The helical; Signal-anchor for type II membrane protein transmembrane segment at 9-36 (CAFYQLLLAALMLVAMLQLLYLSLLSGL) threads the bilayer. Residues 37-415 (HGQEEQDQYF…AKYPNSPRRC (379 aa)) are Lumenal-facing. N-linked (GlcNAc...) asparagine glycosylation is present at asparagine 204. Residues aspartate 227 and aspartate 229 each contribute to the Mn(2+) site. Asparagine 300 carries an N-linked (GlcNAc...) asparagine glycan.

The protein belongs to the glycosyltransferase 49 family. In terms of assembly, interacts with LARGE1 and LARGE2. It depends on Mn(2+) as a cofactor. In the adult, highly expressed in heart, brain, skeletal muscle and kidney and to a lesser extent in placenta, pancreas, spleen, prostate, testis, ovary, small intestine and colon. Very weak expression in lung, liver, thymus and peripheral blood leukocytes. In fetal highly expressed in brain and kidney and to a lesser extent in lung and liver.

The protein resides in the golgi apparatus membrane. It catalyses the reaction 3-O-[beta-D-Xyl-(1-&gt;4)-Rib-ol-P-Rib-ol-P-3-beta-D-GalNAc-(1-&gt;3)-beta-D-GlcNAc-(1-&gt;4)-(O-6-P-alpha-D-Man)]-Thr-[protein] + UDP-alpha-D-glucuronate = 3-O-[beta-D-GlcA-(1-&gt;3)-beta-D-Xyl-(1-&gt;4)-Rib-ol-P-Rib-ol-P-3-beta-D-GalNAc-(1-&gt;3)-beta-D-GlcNAc-(1-&gt;4)-(O-6-P-alpha-D-Man)]-Thr-[protein] + UDP + H(+). Its pathway is protein modification; protein glycosylation. Its function is as follows. Beta-1,4-glucuronyltransferase involved in O-mannosylation of alpha-dystroglycan (DAG1). Transfers a glucuronic acid (GlcA) residue onto a xylose (Xyl) acceptor to produce the glucuronyl-beta-1,4-xylose-beta disaccharide primer, which is further elongated by LARGE1, during synthesis of phosphorylated O-mannosyl glycan. Phosphorylated O-mannosyl glycan is a carbohydrate structure present in alpha-dystroglycan (DAG1), which is required for binding laminin G-like domain-containing extracellular proteins with high affinity. Required for axon guidance; via its function in O-mannosylation of alpha-dystroglycan (DAG1). This chain is Beta-1,4-glucuronyltransferase 1, found in Homo sapiens (Human).